Here is a 413-residue protein sequence, read N- to C-terminus: Aspartate aminotransferase, cytoplasmic (413 aa).

2 residues coordinate L-aspartate: Gly-39 and Trp-141. Ser-149 bears the Phosphoserine mark. An L-aspartate-binding site is contributed by Asn-195. Residue Lys-259 is modified to N6-(pyridoxal phosphate)lysine. Arg-387 is a binding site for L-aspartate.

This sequence belongs to the class-I pyridoxal-phosphate-dependent aminotransferase family. Homodimer. Pyridoxal 5'-phosphate is required as a cofactor.

It is found in the cytoplasm. It carries out the reaction L-aspartate + 2-oxoglutarate = oxaloacetate + L-glutamate. It catalyses the reaction L-cysteine + 2-oxoglutarate = 2-oxo-3-sulfanylpropanoate + L-glutamate. The catalysed reaction is (2S)-2-aminobutanoate + 2-oxoglutarate = 2-oxobutanoate + L-glutamate. The enzyme catalyses 3-sulfino-L-alanine + 2-oxoglutarate = 3-sulfinopyruvate + L-glutamate. Biosynthesis of L-glutamate from L-aspartate or L-cysteine. Important regulator of levels of glutamate, the major excitatory neurotransmitter of the vertebrate central nervous system. Acts as a scavenger of glutamate in brain neuroprotection. The aspartate aminotransferase activity is involved in hepatic glucose synthesis during development and in adipocyte glyceroneogenesis. Using L-cysteine as substrate, regulates levels of mercaptopyruvate, an important source of hydrogen sulfide. Mercaptopyruvate is converted into H(2)S via the action of 3-mercaptopyruvate sulfurtransferase (3MST). Hydrogen sulfide is an important synaptic modulator and neuroprotectant in the brain. In addition, catalyzes (2S)-2-aminobutanoate, a by-product in the cysteine biosynthesis pathway. This chain is Aspartate aminotransferase, cytoplasmic, found in Homo sapiens (Human).